We begin with the raw amino-acid sequence, 731 residues long: Alpha-xylosidase (731 aa).

Active-site residues include aspartate 353 and glutamate 356. Aspartate 428 serves as the catalytic Proton donor.

Belongs to the glycosyl hydrolase 31 family. In terms of assembly, monomer.

The enzyme catalyses Hydrolysis of terminal, non-reducing alpha-D-xylose residues with release of alpha-D-xylose.. Catalyzes the liberation of alpha-xylose from the non-reducing terminal glucose of xyloglucan oligosaccharides. Has high hydrolytic activity on the disaccharide isoprimeverose. Follows a retaining mechanism of substrate hydrolysis. This is Alpha-xylosidase (xylS) from Saccharolobus solfataricus (strain ATCC 35092 / DSM 1617 / JCM 11322 / P2) (Sulfolobus solfataricus).